Consider the following 78-residue polypeptide: Beta-defensin 29 (78 aa).

An N-terminal signal peptide occupies residues 1-23; sequence MPVTKSYFMTVVVVLILVDETTG. Cystine bridges form between Cys-40/Cys-67, Cys-47/Cys-61, and Cys-51/Cys-68.

It belongs to the beta-defensin family. As to expression, highly expressed in the cauda epididymis.

Its subcellular location is the secreted. Has antibacterial activity. This is Beta-defensin 29 (Defb29) from Mus musculus (Mouse).